A 388-amino-acid chain; its full sequence is MLPFFDSPSPMDIPLYQQLQLTPPSPKPDHHHHHHSTFFYYHHHPPPSPSFPSFPSPAAATIASPSPAMHPFMDLELEPHGQQLAAAEEDGAGGQGVDAGVPFGVDGAAAAAAARKDRHSKISTAGGMRDRRMRLSLDVARKFFALQDMLGFDKASKTVQWLLNMSKAAIREIMSDDASSVCEEDGSSSLSVDGKQQQHSNPADRGGGAGDHKGAAHGHSDGKKPAKPRRAAANPKPPRRLANAHPVPDKESRAKARERARERTKEKNRMRWVTLASAISVEAATAAAAAGEDKSPTSPSNNLNHSSSTNLVSTELEDGSSSTRHNGVGVSGGRMQEISAASEASDVIMAFANGGAYGDSGSYYLQQQHQQDQWELGGVVYANSRHYC.

One can recognise a TCP domain in the interval 115-173 (RKDRHSKISTAGGMRDRRMRLSLDVARKFFALQDMLGFDKASKTVQWLLNMSKAAIREI). 2 disordered regions span residues 180–269 (SVCE…EKNR) and 289–331 (AAGE…VGVS). The span at 187–201 (SSSLSVDGKQQQHSN) shows a compositional bias: polar residues. Basic and acidic residues-rich tracts occupy residues 210-224 (GDHKGAAHGHSDGKK) and 247-269 (VPDKESRAKARERARERTKEKNR). One can recognise a R domain in the interval 250 to 267 (KESRAKARERARERTKEK). Over residues 289-314 (AAGEDKSPTSPSNNLNHSSSTNLVST) the composition is skewed to low complexity.

In terms of assembly, interacts with MADS57. Expressed in the axillary bud of the first formed leaf node. Expressed in axillary buds, shoot apical meristem, young leaves, vascular tissues and the tips of crown roots.

It localises to the nucleus. In terms of biological role, probable transcription factor that functions as a negative regulator of lateral branching, presumably through its expression in axillary buds. Involved in the fine tuning of shoot branching. May function as an integrator of multiple signaling pathways to regulate the development of axillary buds. Works partially downstream of strigolactones to inhibit bud outgrowth. Binds to MADS57 to suppress the negative regulation of D14 by MADS57 and balance the expression of D14 for tillering. This chain is Transcription factor TB1, found in Oryza sativa subsp. japonica (Rice).